The following is a 248-amino-acid chain: Protein-lysine N-methyltransferase EFM5 (248 aa).

It belongs to the class I-like SAM-binding methyltransferase superfamily. EFM5 family.

The protein resides in the cytoplasm. Its function is as follows. S-adenosyl-L-methionine-dependent protein-lysine N-methyltransferase that trimethylates elongation factor 1-alpha (TEF1 and TEF2) at 'Lys-79'. Required for replication of Brome mosaic virus (BMV). This is Protein-lysine N-methyltransferase EFM5 from Saccharomyces cerevisiae (strain ATCC 204508 / S288c) (Baker's yeast).